The chain runs to 344 residues: Phosphate acyltransferase (344 aa).

It belongs to the PlsX family. As to quaternary structure, homodimer. Probably interacts with PlsY.

The protein localises to the cytoplasm. It catalyses the reaction a fatty acyl-[ACP] + phosphate = an acyl phosphate + holo-[ACP]. The protein operates within lipid metabolism; phospholipid metabolism. Its function is as follows. Catalyzes the reversible formation of acyl-phosphate (acyl-PO(4)) from acyl-[acyl-carrier-protein] (acyl-ACP). This enzyme utilizes acyl-ACP as fatty acyl donor, but not acyl-CoA. This Cyanothece sp. (strain PCC 7425 / ATCC 29141) protein is Phosphate acyltransferase.